Consider the following 132-residue polypeptide: Small ribosomal subunit protein uS19 (132 aa).

It belongs to the universal ribosomal protein uS19 family. Part of the 30S ribosomal subunit.

Functionally, protein S19 forms a complex with S13 that binds strongly to the 16S ribosomal RNA. This is Small ribosomal subunit protein uS19 from Pyrococcus furiosus (strain ATCC 43587 / DSM 3638 / JCM 8422 / Vc1).